We begin with the raw amino-acid sequence, 65 residues long: Photosystem II reaction center protein H (65 aa).

The chain crosses the membrane as a helical span at residues 27 to 47 (GAVPVMAFIGVLLLVFLVIML).

Belongs to the PsbH family. PSII is composed of 1 copy each of membrane proteins PsbA, PsbB, PsbC, PsbD, PsbE, PsbF, PsbH, PsbI, PsbJ, PsbK, PsbL, PsbM, PsbT, PsbX, PsbY, Psb30/Ycf12, peripheral proteins PsbO, CyanoQ (PsbQ), PsbU, PsbV and a large number of cofactors. It forms dimeric complexes.

The protein localises to the cellular thylakoid membrane. In terms of biological role, one of the components of the core complex of photosystem II (PSII), required for its stability and/or assembly. PSII is a light-driven water:plastoquinone oxidoreductase that uses light energy to abstract electrons from H(2)O, generating O(2) and a proton gradient subsequently used for ATP formation. It consists of a core antenna complex that captures photons, and an electron transfer chain that converts photonic excitation into a charge separation. The protein is Photosystem II reaction center protein H of Prochlorococcus marinus (strain NATL1A).